A 143-amino-acid polypeptide reads, in one-letter code: ATP synthase subunit b' (143 aa).

The helical transmembrane segment at 6 to 26 (ATLPLMALQFVLLAIILNAIF) threads the bilayer.

This sequence belongs to the ATPase B chain family. As to quaternary structure, F-type ATPases have 2 components, F(1) - the catalytic core - and F(0) - the membrane proton channel. F(1) has five subunits: alpha(3), beta(3), gamma(1), delta(1), epsilon(1). F(0) has four main subunits: a(1), b(1), b'(1) and c(10-14). The alpha and beta chains form an alternating ring which encloses part of the gamma chain. F(1) is attached to F(0) by a central stalk formed by the gamma and epsilon chains, while a peripheral stalk is formed by the delta, b and b' chains.

It localises to the cellular thylakoid membrane. F(1)F(0) ATP synthase produces ATP from ADP in the presence of a proton or sodium gradient. F-type ATPases consist of two structural domains, F(1) containing the extramembraneous catalytic core and F(0) containing the membrane proton channel, linked together by a central stalk and a peripheral stalk. During catalysis, ATP synthesis in the catalytic domain of F(1) is coupled via a rotary mechanism of the central stalk subunits to proton translocation. In terms of biological role, component of the F(0) channel, it forms part of the peripheral stalk, linking F(1) to F(0). The b'-subunit is a diverged and duplicated form of b found in plants and photosynthetic bacteria. The polypeptide is ATP synthase subunit b' (Crocosphaera subtropica (strain ATCC 51142 / BH68) (Cyanothece sp. (strain ATCC 51142))).